The sequence spans 161 residues: uncharacterized protein (161 aa).

The protein to M.thermoautotrophicum MTH862.

This is an uncharacterized protein from Methanocaldococcus jannaschii (strain ATCC 43067 / DSM 2661 / JAL-1 / JCM 10045 / NBRC 100440) (Methanococcus jannaschii).